The sequence spans 93 residues: Large ribosomal subunit protein bL31 (93 aa).

The segment at 72–93 is disordered; sequence VKTVSSNADNQKETTEELIKNK. Basic and acidic residues predominate over residues 81-93; that stretch reads NQKETTEELIKNK.

This sequence belongs to the bacterial ribosomal protein bL31 family. Type A subfamily. Part of the 50S ribosomal subunit.

Its function is as follows. Binds the 23S rRNA. This chain is Large ribosomal subunit protein bL31, found in Onion yellows phytoplasma (strain OY-M).